A 340-amino-acid chain; its full sequence is tRNA N6-adenosine threonylcarbamoyltransferase (340 aa).

Fe cation is bound by residues His111 and His115. Substrate-binding positions include 133-137, Asp166, Gly179, Asp183, and Asn273; that span reads VVSGG. Asp301 contacts Fe cation.

It belongs to the KAE1 / TsaD family. Requires Fe(2+) as cofactor.

The protein resides in the cytoplasm. The catalysed reaction is L-threonylcarbamoyladenylate + adenosine(37) in tRNA = N(6)-L-threonylcarbamoyladenosine(37) in tRNA + AMP + H(+). Its function is as follows. Required for the formation of a threonylcarbamoyl group on adenosine at position 37 (t(6)A37) in tRNAs that read codons beginning with adenine. Is involved in the transfer of the threonylcarbamoyl moiety of threonylcarbamoyl-AMP (TC-AMP) to the N6 group of A37, together with TsaE and TsaB. TsaD likely plays a direct catalytic role in this reaction. This Pelobacter propionicus (strain DSM 2379 / NBRC 103807 / OttBd1) protein is tRNA N6-adenosine threonylcarbamoyltransferase.